The sequence spans 316 residues: Probable inactive poly [ADP-ribose] polymerase SRO4 (316 aa).

The segment at 1 to 28 is disordered; the sequence is MDYSKTEETPINEEQGSTNSSESRSNEE. Residues 14–23 show a composition bias toward low complexity; the sequence is EQGSTNSSES. The PARP catalytic domain maps to 28–255; it reads ELFSDCDQQH…KSPWISFPVL (228 aa). The RST domain occupies 243-314; sequence KNPKSPWISF…IKSVGQKVHK (72 aa).

The protein localises to the nucleus. Functionally, probable inactive ADP-ribosyltransferase that may be involved in stress and developmental responses. This is Probable inactive poly [ADP-ribose] polymerase SRO4 (SRO4) from Arabidopsis thaliana (Mouse-ear cress).